A 335-amino-acid chain; its full sequence is Tetraacyldisaccharide 4'-kinase (335 aa).

ATP is bound at residue 51 to 58; the sequence is HVGGAGKT.

The protein belongs to the LpxK family.

The catalysed reaction is a lipid A disaccharide + ATP = a lipid IVA + ADP + H(+). Its pathway is glycolipid biosynthesis; lipid IV(A) biosynthesis; lipid IV(A) from (3R)-3-hydroxytetradecanoyl-[acyl-carrier-protein] and UDP-N-acetyl-alpha-D-glucosamine: step 6/6. Functionally, transfers the gamma-phosphate of ATP to the 4'-position of a tetraacyldisaccharide 1-phosphate intermediate (termed DS-1-P) to form tetraacyldisaccharide 1,4'-bis-phosphate (lipid IVA). This Bradyrhizobium sp. (strain ORS 278) protein is Tetraacyldisaccharide 4'-kinase.